A 113-amino-acid chain; its full sequence is Retrotransposon Gag-like protein 8C (113 aa).

It belongs to the FAM127 family.

The protein is Retrotransposon Gag-like protein 8C of Homo sapiens (Human).